A 128-amino-acid polypeptide reads, in one-letter code: Fluoride-specific ion channel FluC (128 aa).

4 helical membrane passes run 5–25 (IVAIFVGAGLGALLRWFLSLA), 35–55 (LGTLAANLIGGYVIGIAAVVF), 67–87 (LFVITGFLGGLTTFSTYSVEV), and 96–116 (FGWAFAVAALHLTGSFALTAL). Positions 75 and 78 each coordinate Na(+).

Belongs to the fluoride channel Fluc/FEX (TC 1.A.43) family.

Its subcellular location is the cell inner membrane. It catalyses the reaction fluoride(in) = fluoride(out). Na(+) is not transported, but it plays an essential structural role and its presence is essential for fluoride channel function. Its function is as follows. Fluoride-specific ion channel. Important for reducing fluoride concentration in the cell, thus reducing its toxicity. This chain is Fluoride-specific ion channel FluC, found in Burkholderia lata (strain ATCC 17760 / DSM 23089 / LMG 22485 / NCIMB 9086 / R18194 / 383).